A 378-amino-acid polypeptide reads, in one-letter code: Flap endonuclease 1 (378 aa).

Positions 1-104 (MGVKDLSKVI…SELEKRTERR (104 aa)) are N-domain. Residue Asp34 participates in Mg(2+) binding. Residues Arg47 and Arg70 each coordinate DNA. Asp86 serves as a coordination point for Mg(2+). A disordered region spans residues 90–113 (PQMKTSELEKRTERRTEAEKQRND). Residues 95-113 (SELEKRTERRTEAEKQRND) are compositionally biased toward basic and acidic residues. Residues 122 to 253 (SVNKFEKRLV…KKAFELIKKY (132 aa)) are I-domain. Mg(2+) contacts are provided by Glu158, Glu160, Asp179, and Asp181. A DNA-binding site is contributed by Glu158. Residues Gly231 and Asp233 each contribute to the DNA site. Mg(2+) is bound at residue Asp233. The tract at residues 336–344 (QQARIDSFF) is interaction with PCNA. A disordered region spans residues 348–378 (KVVTSETTKRKNEEKNNLKKRGPSLGKKAKK). Positions 354–364 (TTKRKNEEKNN) are enriched in basic and acidic residues. The span at 365-378 (LKKRGPSLGKKAKK) shows a compositional bias: basic residues.

Belongs to the XPG/RAD2 endonuclease family. FEN1 subfamily. Interacts with PCNA. Three molecules of FEN1 bind to one PCNA trimer with each molecule binding to one PCNA monomer. PCNA stimulates the nuclease activity without altering cleavage specificity. Requires Mg(2+) as cofactor. Post-translationally, phosphorylated. Phosphorylation upon DNA damage induces relocalization to the nuclear plasma.

Its subcellular location is the nucleus. The protein resides in the nucleolus. The protein localises to the nucleoplasm. It is found in the mitochondrion. Functionally, structure-specific nuclease with 5'-flap endonuclease and 5'-3' exonuclease activities involved in DNA replication and repair. During DNA replication, cleaves the 5'-overhanging flap structure that is generated by displacement synthesis when DNA polymerase encounters the 5'-end of a downstream Okazaki fragment. It enters the flap from the 5'-end and then tracks to cleave the flap base, leaving a nick for ligation. Also involved in the long patch base excision repair (LP-BER) pathway, by cleaving within the apurinic/apyrimidinic (AP) site-terminated flap. Acts as a genome stabilization factor that prevents flaps from equilibrating into structures that lead to duplications and deletions. Also possesses 5'-3' exonuclease activity on nicked or gapped double-stranded DNA, and exhibits RNase H activity. Also involved in replication and repair of rDNA and in repairing mitochondrial DNA. The sequence is that of Flap endonuclease 1 from Brugia malayi (Filarial nematode worm).